The following is a 548-amino-acid chain: Eukaryotic translation initiation factor 3 subunit D (548 aa).

N6-acetyllysine is present on Lys53. A Phosphoserine modification is found at Ser161. An RNA gate region spans residues 285 to 299; it reads DFDLLTVSETANEPP. A disordered region spans residues 523 to 548; the sequence is PDGTFSSDEDEEEEEEEEEEEEEEET. 2 positions are modified to phosphoserine: Ser528 and Ser529. Residues 529-548 show a composition bias toward acidic residues; that stretch reads SDEDEEEEEEEEEEEEEEET.

It belongs to the eIF-3 subunit D family. In terms of assembly, component of the eukaryotic translation initiation factor 3 (eIF-3) complex, which is composed of 13 subunits: EIF3A, EIF3B, EIF3C, EIF3D, EIF3E, EIF3F, EIF3G, EIF3H, EIF3I, EIF3J, EIF3K, EIF3L and EIF3M. The eIF-3 complex appears to include 3 stable modules: module A is composed of EIF3A, EIF3B, EIF3G and EIF3I; module B is composed of EIF3F, EIF3H, and EIF3M; and module C is composed of EIF3C, EIF3D, EIF3E, EIF3K and EIF3L. EIF3C of module C binds EIF3B of module A and EIF3H of module B, thereby linking the three modules. EIF3J is a labile subunit that binds to the eIF-3 complex via EIF3B. The eIF-3 complex interacts with RPS6KB1 under conditions of nutrient depletion. Mitogenic stimulation leads to binding and activation of a complex composed of MTOR and RPTOR, leading to phosphorylation and release of RPS6KB1 and binding of EIF4B to eIF-3. As to quaternary structure, (Microbial infection) Interacts with Norwalk virus VPg protein.

It localises to the cytoplasm. In terms of biological role, mRNA cap-binding component of the eukaryotic translation initiation factor 3 (eIF-3) complex, a complex required for several steps in the initiation of protein synthesis of a specialized repertoire of mRNAs. The eIF-3 complex associates with the 40S ribosome and facilitates the recruitment of eIF-1, eIF-1A, eIF-2:GTP:methionyl-tRNAi and eIF-5 to form the 43S pre-initiation complex (43S PIC). The eIF-3 complex stimulates mRNA recruitment to the 43S PIC and scanning of the mRNA for AUG recognition. The eIF-3 complex is also required for disassembly and recycling of post-termination ribosomal complexes and subsequently prevents premature joining of the 40S and 60S ribosomal subunits prior to initiation. The eIF-3 complex specifically targets and initiates translation of a subset of mRNAs involved in cell proliferation, including cell cycling, differentiation and apoptosis, and uses different modes of RNA stem-loop binding to exert either translational activation or repression. In the eIF-3 complex, EIF3D specifically recognizes and binds the 7-methylguanosine cap of a subset of mRNAs. Functionally, (Microbial infection) In case of FCV infection, plays a role in the ribosomal termination-reinitiation event leading to the translation of VP2. This is Eukaryotic translation initiation factor 3 subunit D from Homo sapiens (Human).